The following is a 307-amino-acid chain: Atrochrysone carboxyl ACP thioesterase (307 aa).

His-104, His-106, Asp-108, and His-109 together coordinate Zn(2+). The active-site Proton donor/acceptor is Asp-108.

Belongs to the metallo-beta-lactamase superfamily. Zn(2+) serves as cofactor.

It carries out the reaction atrochrysone carboxyl-[ACP] + H2O = atrochrysone carboxylate + holo-[ACP] + H(+). The protein operates within secondary metabolite biosynthesis. Its function is as follows. Atrochrysone carboxyl ACP thioesterase; part of the gene cluster that mediates the biosynthesis of monodictyphenone, a prenyl xanthone derivative. The pathway begins with the synthesis of atrochrysone thioester by the polyketide synthase (PKS) mdpG. The atrochrysone carboxyl ACP thioesterase mdpF then breaks the thioester bond and releases the atrochrysone carboxylic acid from mdpG. The atrochrysone carboxylic acid is then converted to atrochrysone which is further transformed into emodin anthrone. The next step is performed by the anthrone oxygenase mdpH that catalyzes the oxidation of emodinanthrone to emodin. Emodin is further modified to yield monodictyphenone via several steps involving mdpB, mdpC mdpJ, mdpK and mdpL. The short chain dehydrogenase mdpC converts the tautomers of emodin hydroquinone into the 3-hydroxy-3,4-dihydroan-thracen-1(2H)-one derivative. These enzymes with xptA, xptB and xptC are also proposed to be involved in the synthesis of shamixanthone from emodin. Especially, direct reduction of emodin by the short chain dehydrogenase mdpC followed by dehydration catalyzed by the scytalone dehydratase-like protein mdpB gives loss of oxygen and formation of chrysophanol intermediate in two simple steps. In Emericella nidulans (strain FGSC A4 / ATCC 38163 / CBS 112.46 / NRRL 194 / M139) (Aspergillus nidulans), this protein is Atrochrysone carboxyl ACP thioesterase.